The following is a 338-amino-acid chain: Penicillin V acylase (338 aa).

A propeptide spans 1–3 (removed in mature form); the sequence is MLG. Cys-4 serves as the catalytic Nucleophile.

It belongs to the peptidase C59 family. In terms of assembly, homotetramer. Post-translationally, expressed as an inactive precursor that is cleaved autocatalytically at Gly-3/Cys-4 to generate an active enzyme. Processing exposes a catalytic N-terminal nucleophile residue with a free alpha amino group.

The catalysed reaction is a penicillin + H2O = 6-aminopenicillanate + a carboxylate. Its activity is regulated as follows. Hydrolase activity is rapidly inhibited by lysine modifying reagents. Its function is as follows. Catalyzes the hydrolysis of penicillin V to 6-aminopenicillanate (6-APA). Exhibits high specificity for penicillin V. Penicillin G and other related compounds are hydrolyzed at less than 10% of the rate of penicillin V. Among the cephalosporins, cephalosporin C is resistant to cleavage, whereas cephalosporin G is cleaved at about 1% of the rate of cleavage of penicillin V. In Lysinibacillus sphaericus (Bacillus sphaericus), this protein is Penicillin V acylase.